A 361-amino-acid polypeptide reads, in one-letter code: Phosphoserine aminotransferase (361 aa).

Arg-43 contacts L-glutamate. Residues 77 to 78, Trp-103, Thr-153, Asp-173, and Gln-196 contribute to the pyridoxal 5'-phosphate site; that span reads AS. N6-(pyridoxal phosphate)lysine is present on Lys-197. Residue 238-239 coordinates pyridoxal 5'-phosphate; sequence NT.

Belongs to the class-V pyridoxal-phosphate-dependent aminotransferase family. SerC subfamily. As to quaternary structure, homodimer. Pyridoxal 5'-phosphate is required as a cofactor.

It localises to the cytoplasm. It catalyses the reaction O-phospho-L-serine + 2-oxoglutarate = 3-phosphooxypyruvate + L-glutamate. It carries out the reaction 4-(phosphooxy)-L-threonine + 2-oxoglutarate = (R)-3-hydroxy-2-oxo-4-phosphooxybutanoate + L-glutamate. It functions in the pathway amino-acid biosynthesis; L-serine biosynthesis; L-serine from 3-phospho-D-glycerate: step 2/3. It participates in cofactor biosynthesis; pyridoxine 5'-phosphate biosynthesis; pyridoxine 5'-phosphate from D-erythrose 4-phosphate: step 3/5. Catalyzes the reversible conversion of 3-phosphohydroxypyruvate to phosphoserine and of 3-hydroxy-2-oxo-4-phosphonooxybutanoate to phosphohydroxythreonine. The protein is Phosphoserine aminotransferase of Pseudomonas aeruginosa (strain ATCC 15692 / DSM 22644 / CIP 104116 / JCM 14847 / LMG 12228 / 1C / PRS 101 / PAO1).